Reading from the N-terminus, the 199-residue chain is Ribosome maturation factor RimM (199 aa).

A PRC barrel domain is found at 100-195 (ADEWYPKDLI…YLTLDPPGGL (96 aa)).

Belongs to the RimM family. As to quaternary structure, binds ribosomal protein uS19.

It localises to the cytoplasm. An accessory protein needed during the final step in the assembly of 30S ribosomal subunit, possibly for assembly of the head region. Essential for efficient processing of 16S rRNA. May be needed both before and after RbfA during the maturation of 16S rRNA. It has affinity for free ribosomal 30S subunits but not for 70S ribosomes. The sequence is that of Ribosome maturation factor RimM from Bifidobacterium longum (strain DJO10A).